The primary structure comprises 182 residues: Heat shock protein beta-2 (182 aa).

The 109-residue stretch at 55 to 163 (RAGEGGRAGA…DTEVNEVYIS (109 aa)) folds into the sHSP domain.

It belongs to the small heat shock protein (HSP20) family. As to quaternary structure, interacts with DMPK; may enhance its kinase activity.

The protein resides in the cytoplasm. The protein localises to the nucleus. Its function is as follows. May regulate the kinase DMPK. The protein is Heat shock protein beta-2 (Hspb2) of Rattus norvegicus (Rat).